The following is a 449-amino-acid chain: MANVVENLGKLERRVTISLPKDVVQKEIDARIQKLAKNVRMPGFRPGKVPLKMVAQQYAGQVEAEVLSDKIGQEFFTISRAENLRVAGQPSFAPKEDTQQESTYAFDATFEVYPEVKIGDLATAEVERSTTTIGDAEIDRTLDILRKQRVHFHARGEGGEHGDGGADTAAQNGDRVTVDFVGKIDGVAFQGGTAEDFVFVLGEGRMLPEFETAALGLKAGESREFDLKFPDDYHGKDVAGKTAQFTVTLKKVEWPHLPEIDADFAKSLGVEDGDLTKMRAEIKENLEREAKRRTQSIVKNQVMDALLKISELDVPKALIEQDQQRLVEMARQDLAQRGVPNAKDAPIPAEMFADQAERRVKLGLVLAELVKANGLEAKPEQIRAEVDEFAKSYEDPKEVVRWYYSNQQRLAEMEAFVVESNVVDFVLGKAKVTDKEVSFEALASATAQA.

The region spanning 173–258 (GDRVTVDFVG…LKKVEWPHLP (86 aa)) is the PPIase FKBP-type domain.

This sequence belongs to the FKBP-type PPIase family. Tig subfamily.

The protein resides in the cytoplasm. The enzyme catalyses [protein]-peptidylproline (omega=180) = [protein]-peptidylproline (omega=0). Functionally, involved in protein export. Acts as a chaperone by maintaining the newly synthesized protein in an open conformation. Functions as a peptidyl-prolyl cis-trans isomerase. This chain is Trigger factor, found in Burkholderia pseudomallei (strain 1710b).